Reading from the N-terminus, the 317-residue chain is Protoheme IX farnesyltransferase (317 aa).

The next 9 membrane-spanning stretches (helical) occupy residues 39–58 (VMSL…PGSL), 62–84 (LGAI…NMWY), 100–120 (IPAG…LAVG), 123–143 (LVMW…AIFF), 160–180 (IVIG…AVTG), 184–204 (LMPV…FWSL), 233–253 (IMAY…LGDT), 256–276 (VYGL…WRVL), and 293–313 (ARAA…ALAV).

It belongs to the UbiA prenyltransferase family. Protoheme IX farnesyltransferase subfamily.

The protein resides in the cell inner membrane. The catalysed reaction is heme b + (2E,6E)-farnesyl diphosphate + H2O = Fe(II)-heme o + diphosphate. Its pathway is porphyrin-containing compound metabolism; heme O biosynthesis; heme O from protoheme: step 1/1. Its function is as follows. Converts heme B (protoheme IX) to heme O by substitution of the vinyl group on carbon 2 of heme B porphyrin ring with a hydroxyethyl farnesyl side group. This chain is Protoheme IX farnesyltransferase, found in Granulibacter bethesdensis (strain ATCC BAA-1260 / CGDNIH1).